Consider the following 840-residue polypeptide: Phosphatidylinositol-3-phosphatase myotubularin-1 (840 aa).

Positions 1–28 (MTPPRPPSGRVRSLRDYSSESEKMDGTG) are disordered. The span at 13–25 (SLRDYSSESEKMD) shows a compositional bias: basic and acidic residues. The GRAM domain occupies 45–112 (GSFSNLSCLL…ATIEKFNKMV (68 aa)). Residues 199–650 (GKSSIRASMD…LAPTLWPQFH (452 aa)) form the Myotubularin phosphatase domain. Substrate-binding positions include 332–335 (NGAM), 357–358 (NI), 443–449 (CSDGWDR), and arginine 489. The Phosphocysteine intermediate role is filled by cysteine 443. The interval 506–535 (QSSSAGSFPSSPVRQSSGSAASQSSSSSHG) is disordered. Low complexity predominate over residues 507–535 (SSSAGSFPSSPVRQSSGSAASQSSSSSHG). A coiled-coil region spans residues 666 to 734 (VQCRAMTVKY…AALTRAVQSL (69 aa)). A disordered region spans residues 745–771 (VEDDPRSSLENNPRRRNRHGNNSDVSV).

This sequence belongs to the protein-tyrosine phosphatase family. Non-receptor class myotubularin subfamily. Mostly expressed in siliques and leaves (including hydathodes), and, to a lower extent, in flowers and roots.

The protein localises to the cytoplasm. It is found in the endosome membrane. It catalyses the reaction a 1,2-diacyl-sn-glycero-3-phospho-(1D-myo-inositol-3-phosphate) + H2O = a 1,2-diacyl-sn-glycero-3-phospho-(1D-myo-inositol) + phosphate. The enzyme catalyses a 1,2-diacyl-sn-glycero-3-phospho-(1D-myo-inositol-3,5-bisphosphate) + H2O = a 1,2-diacyl-sn-glycero-3-phospho-(1D-myo-inositol-5-phosphate) + phosphate. Phosphatase with phosphoinositide 3'-phosphatase activity that can use phosphatidylinositol-3-phosphate (PtdIns3P) and phosphatidylinositol-3,5-diphosphate (PtdIns3,5P(2)) as substrates and produces phosphatidylinositol-5-phosphate (PtdIns5P); participates in pathway(s) that transfer gene regulatory signals to the nucleus. Required for recovery after water deprivation, via the accumulation of PtdIns5P upon dehydration; high PtdIns5P levels mediate ATX1 cytoplasmic localization, thus down-regulating the expression of ATX1-dependent genes. Confers sensitivity to soil-water-deficit stress. The protein is Phosphatidylinositol-3-phosphatase myotubularin-1 (MTM1) of Arabidopsis thaliana (Mouse-ear cress).